The primary structure comprises 325 residues: Beta-ketoacyl-[acyl-carrier-protein] synthase III (325 aa).

Catalysis depends on residues Cys116 and His252. The segment at 253-257 (QANLR) is ACP-binding. Residue Asn282 is part of the active site.

Belongs to the thiolase-like superfamily. FabH family. As to quaternary structure, homodimer.

The protein resides in the cytoplasm. The catalysed reaction is malonyl-[ACP] + acetyl-CoA + H(+) = 3-oxobutanoyl-[ACP] + CO2 + CoA. It participates in lipid metabolism; fatty acid biosynthesis. Its function is as follows. Catalyzes the condensation reaction of fatty acid synthesis by the addition to an acyl acceptor of two carbons from malonyl-ACP. Catalyzes the first condensation reaction which initiates fatty acid synthesis and may therefore play a role in governing the total rate of fatty acid production. Possesses both acetoacetyl-ACP synthase and acetyl transacylase activities. Its substrate specificity determines the biosynthesis of branched-chain and/or straight-chain of fatty acids. This Xanthomonas euvesicatoria pv. vesicatoria (strain 85-10) (Xanthomonas campestris pv. vesicatoria) protein is Beta-ketoacyl-[acyl-carrier-protein] synthase III.